Consider the following 215-residue polypeptide: Small ribosomal subunit protein uS3 (215 aa).

The KH type-2 domain occupies 39–107 (VRQYLQKRLA…PVHINIEEIR (69 aa)).

This sequence belongs to the universal ribosomal protein uS3 family. As to quaternary structure, part of the 30S ribosomal subunit. Forms a tight complex with proteins S10 and S14.

Binds the lower part of the 30S subunit head. Binds mRNA in the 70S ribosome, positioning it for translation. The chain is Small ribosomal subunit protein uS3 from Nitrosomonas eutropha (strain DSM 101675 / C91 / Nm57).